Consider the following 161-residue polypeptide: Regulator of ribonuclease activity A (161 aa).

It belongs to the RraA family. Homotrimer. Binds to both RNA-binding sites in the C-terminal region of Rne and to RhlB.

Its subcellular location is the cytoplasm. Globally modulates RNA abundance by binding to RNase E (Rne) and regulating its endonucleolytic activity. Can modulate Rne action in a substrate-dependent manner by altering the composition of the degradosome. Modulates RNA-binding and helicase activities of the degradosome. This Pseudoalteromonas atlantica (strain T6c / ATCC BAA-1087) protein is Regulator of ribonuclease activity A.